A 933-amino-acid polypeptide reads, in one-letter code: Neuronal PAS domain-containing protein 4A (933 aa).

The basic motif; degenerate stretch occupies residues methionine 1–arginine 13. In terms of domain architecture, bHLH spans methionine 1–serine 53. Residues aspartate 14–serine 53 are helix-loop-helix motif. PAS domains lie at serine 74–aspartate 148 and threonine 220–glycine 290. Residues alanine 295–threonine 334 enclose the PAC domain. A compositionally biased stretch (polar residues) spans glutamine 361 to cysteine 398. 3 disordered regions span residues glutamine 361–proline 451, glycine 514–leucine 573, and aspartate 750–proline 776. 4 stretches are compositionally biased toward low complexity: residues serine 399–serine 411, glutamate 440–proline 451, glycine 538–glutamine 560, and leucine 751–proline 769.

In terms of assembly, efficient DNA binding requires dimerization with another bHLH protein. As to expression, brain-specific.

Its subcellular location is the nucleus. Functionally, transcription factor expressed in neurons of the brain that regulates the excitatory-inhibitory balance within neural circuits and is required for contextual memory in the hippocampus. Plays a key role in the structural and functional plasticity of neurons. Acts as an early-response transcription factor in both excitatory and inhibitory neurons, where it induces distinct but overlapping sets of late-response genes in these two types of neurons, allowing the synapses that form on inhibitory and excitatory neurons to be modified by neuronal activity in a manner specific to their function within a circuit, thereby facilitating appropriate circuit responses to sensory experience. This is Neuronal PAS domain-containing protein 4A (npas4a) from Danio rerio (Zebrafish).